Here is a 310-residue protein sequence, read N- to C-terminus: Ribonuclease Z (310 aa).

Positions 64, 66, 68, 69, 142, 213, and 271 each coordinate Zn(2+). Asp68 serves as the catalytic Proton acceptor.

This sequence belongs to the RNase Z family. Homodimer. Zn(2+) is required as a cofactor.

It carries out the reaction Endonucleolytic cleavage of RNA, removing extra 3' nucleotides from tRNA precursor, generating 3' termini of tRNAs. A 3'-hydroxy group is left at the tRNA terminus and a 5'-phosphoryl group is left at the trailer molecule.. Functionally, zinc phosphodiesterase, which displays some tRNA 3'-processing endonuclease activity. Probably involved in tRNA maturation, by removing a 3'-trailer from precursor tRNA. This is Ribonuclease Z from Treponema pallidum (strain Nichols).